A 232-amino-acid chain; its full sequence is Protein lin-7 homolog A (232 aa).

A Kinase interacting site motif is present at residues 14-28 (MATLTVVQPLTLDRD). Residues 25–80 (LDRDVARAIELLEKLQESGEVPVHKLQSLKKVLQSEFCTAIREVYQYMHETITVNG) enclose the L27 domain. The PDZ domain maps to 108–190 (VVELPKTDEG…SVKLVVRYTP (83 aa)).

This sequence belongs to the lin-7 family. In terms of assembly, forms a complex with CASK and CASKIN1. Component of the brain-specific heterotrimeric complex (LIN-10-LIN-2-LIN-7 complex) composed of at least APBA1, CASK, and LIN7, which associates with the motor protein KIF17 to transport vesicles along microtubules. Can also interact with other modular proteins containing protein-protein interaction domains like PALS1, PALS2, MPP7, DLG1, DLG2 and DLG3 through its L27 domain. Interacts with DLG4 and GRIN2B as well as CDH1 and CTNNB1, the channels KCNJ12/Kir2.2, KCNJ4/Kir2.3 and probably KCNJ2/Kir2.1 and SLC6A12/BGT-1 via its PDZ domain. The association of LIN7A with cadherin and beta-catenin is calcium-dependent, occurs at synaptic junctions and requires the actin cytoskeleton. Interacts with EGFR, ERBB2, ERBB3 and ERBB4 with both PDZ and KID domains. Associates with KIF17 via APBA1. Interacts with HTR4. Forms a tripartite complex composed of DLG1, MPP7 and LIN7 (LIN7A or LIN7C). Interacts with MARCHF11. Ubiquitously expressed in brain and detected in lung, liver and testis (at protein level). Expression was detected only in brain.

Its subcellular location is the cell membrane. It is found in the basolateral cell membrane. The protein localises to the cell junction. The protein resides in the postsynaptic density membrane. It localises to the tight junction. In terms of biological role, plays a role in establishing and maintaining the asymmetric distribution of channels and receptors at the plasma membrane of polarized cells. Forms membrane-associated multiprotein complexes that may regulate delivery and recycling of proteins to the correct membrane domains. The tripartite complex composed of LIN7 (LIN7A, LIN7B or LIN7C), CASK and APBA1 associates with the motor protein KIF17 to transport vesicles containing N-methyl-D-aspartate (NMDA) receptor subunit NR2B along microtubules. This complex may have the potential to couple synaptic vesicle exocytosis to cell adhesion in brain. Ensures the proper localization of GRIN2B (subunit 2B of the NMDA receptor) to neuronal postsynaptic density and may function in localizing synaptic vesicles at synapses where it is recruited by beta-catenin and cadherin. Required to localize Kir2 channels, GABA transporter (SLC6A12) and EGFR/ERBB1, ERBB2, ERBB3 and ERBB4 to the basolateral membrane of epithelial cells. The sequence is that of Protein lin-7 homolog A (Lin7a) from Rattus norvegicus (Rat).